The primary structure comprises 62 residues: Beta-defensin 37 (62 aa).

The signal sequence occupies residues 1 to 16 (MKFSYFLLLLLSLSNF). 3 disulfides stabilise this stretch: C29–C58, C36–C51, and C41–C59.

Belongs to the beta-defensin family. In terms of tissue distribution, only expressed in epididymis (corpus and cauda).

The protein resides in the secreted. Functionally, has antibacterial activity. This is Beta-defensin 37 (Defb37) from Mus musculus (Mouse).